A 163-amino-acid chain; its full sequence is ATP synthase subunit b 1 (163 aa).

A helical membrane pass occupies residues 7 to 27 (PETWVAIAFVILMGLFAYLGV).

Belongs to the ATPase B chain family. F-type ATPases have 2 components, F(1) - the catalytic core - and F(0) - the membrane proton channel. F(1) has five subunits: alpha(3), beta(3), gamma(1), delta(1), epsilon(1). F(0) has three main subunits: a(1), b(2) and c(10-14). The alpha and beta chains form an alternating ring which encloses part of the gamma chain. F(1) is attached to F(0) by a central stalk formed by the gamma and epsilon chains, while a peripheral stalk is formed by the delta and b chains.

The protein localises to the cell inner membrane. Functionally, f(1)F(0) ATP synthase produces ATP from ADP in the presence of a proton or sodium gradient. F-type ATPases consist of two structural domains, F(1) containing the extramembraneous catalytic core and F(0) containing the membrane proton channel, linked together by a central stalk and a peripheral stalk. During catalysis, ATP synthesis in the catalytic domain of F(1) is coupled via a rotary mechanism of the central stalk subunits to proton translocation. Component of the F(0) channel, it forms part of the peripheral stalk, linking F(1) to F(0). The chain is ATP synthase subunit b 1 from Bradyrhizobium sp. (strain BTAi1 / ATCC BAA-1182).